A 346-amino-acid polypeptide reads, in one-letter code: Magnesium-chelatase 38 kDa subunit (346 aa).

34–41 (GHRGTGKS) is a binding site for ATP.

The protein belongs to the Mg-chelatase subunits D/I family.

It carries out the reaction protoporphyrin IX + Mg(2+) + ATP + H2O = Mg-protoporphyrin IX + ADP + phosphate + 3 H(+). Its pathway is porphyrin-containing compound metabolism; bacteriochlorophyll biosynthesis. In terms of biological role, involved in bacteriochlorophyll biosynthesis; introduces a magnesium ion into protoporphyrin IX to yield Mg-protoporphyrin IX. The polypeptide is Magnesium-chelatase 38 kDa subunit (bchI) (Chlorobaculum parvum (strain DSM 263 / NCIMB 8327) (Chlorobium vibrioforme subsp. thiosulfatophilum)).